The chain runs to 203 residues: FMN-dependent NADH:quinone oxidoreductase (203 aa).

FMN-binding positions include Ser-9, Ser-15–Ser-17, and Ser-138–Gly-141.

Belongs to the azoreductase type 1 family. In terms of assembly, homodimer. FMN is required as a cofactor.

It catalyses the reaction 2 a quinone + NADH + H(+) = 2 a 1,4-benzosemiquinone + NAD(+). The catalysed reaction is N,N-dimethyl-1,4-phenylenediamine + anthranilate + 2 NAD(+) = 2-(4-dimethylaminophenyl)diazenylbenzoate + 2 NADH + 2 H(+). Its function is as follows. Quinone reductase that provides resistance to thiol-specific stress caused by electrophilic quinones. Also exhibits azoreductase activity. Catalyzes the reductive cleavage of the azo bond in aromatic azo compounds to the corresponding amines. The chain is FMN-dependent NADH:quinone oxidoreductase from Methylorubrum populi (strain ATCC BAA-705 / NCIMB 13946 / BJ001) (Methylobacterium populi).